Here is a 328-residue protein sequence, read N- to C-terminus: 2-oxoglutarate-dependent dioxygenase gloF (328 aa).

A Fe2OG dioxygenase domain is found at 175–289; the sequence is DTSELRMNHY…RYSVAYFGKP (115 aa). The Fe cation site is built by histidine 201, aspartate 203, and histidine 261. Arginine 280 contacts 2-oxoglutarate.

The protein belongs to the iron/ascorbate-dependent oxidoreductase family. Fe(2+) is required as a cofactor.

Its pathway is mycotoxin biosynthesis. In terms of biological role, 2-oxoglutarate-dependent dioxygenase; part of the gene cluster that mediates the biosynthesis of pneumocandins, lipohexapeptides of the echinocandin family that prevent fungal cell wall formation by non-competitive inhibition of beta-1,3-glucan synthase. The 10,12-dimethylmyristoyl side chain is synthesized by the reducing polyketide synthase gloL/GLPKS4. The thioesterase gloN/GLHYD exclusively interacts with gloL/GLPKS4 to maintain turnover of the polyketide side chain. The 10R,12S-dimethylmyristic acid is then transferred to the first thiolation domain of the nonribosomal peptide synthetase gloA/GLNRPS4 by the acyl-AMP ligase gloD/GLligase, followed by its acylation to L-ornithine to trigger elongation of the cyclic hexapeptide. L-ornithine, 4R-hydroxyl-L-proline (generated from L-proline by the dioxygenase gloF/GLOXY2), 3S-hydroxyl-L-homotyrosine (generated by gloG/GLHtyB, gloH/GLHtyA, gloI/GLHtyC, gloJ/GLHtyD and hydroxylated at C-3 by the dioxygenase gloM/GLOXY1), 3R-hydroxyl-L-glutamine (generated from L-glutamine probably by the dioxygenase gloE/GLOXY3) and 3S-hydroxyl-L-proline (generated from L-proline by the dioxygenase gloF/GLOXY2 to yield pneumocandin B0), or 3S-hydroxyl-4S-methyl-L-proline (generated from L-leucine by the dioxygenase gloC/GLOXY4 to yield pneumocandin A0) are sequentially added to the growing chain. The last C domain of gloA/GLNRPS4 is proposed to be responsible for cyclization by condensation to form the peptide bond between L-ornithine and 3S-hydroxyl-4S-methyl-L-proline (for pneumocandin A0) or 3S-hydroxyl-L-proline (for pneumocandin B0). Finally, the subsequent C-4 hydroxylation of 3S-hydroxyl-L-homotyrosine and L-ornithine dihydroxylation at C-4 and C-5 are performed by the cytochrome P450 monooxygenases gloP/GLP450-1 and gloO/GLP450-2, respectively. The chain is 2-oxoglutarate-dependent dioxygenase gloF from Glarea lozoyensis (strain ATCC 20868 / MF5171).